The sequence spans 432 residues: Adenylosuccinate synthetase (432 aa).

Residues glycine 13–lysine 19 and glycine 41–threonine 43 each bind GTP. Aspartate 14 functions as the Proton acceptor in the catalytic mechanism. The Mg(2+) site is built by aspartate 14 and glycine 41. IMP contacts are provided by residues aspartate 14–lysine 17, asparagine 39–histidine 42, threonine 130, arginine 144, glutamine 225, threonine 240, and arginine 304. Histidine 42 serves as the catalytic Proton donor. A substrate-binding site is contributed by alanine 300–arginine 306. GTP is bound by residues arginine 306, lysine 332–aspartate 334, and serine 415–glycine 417.

It belongs to the adenylosuccinate synthetase family. Homodimer. Mg(2+) is required as a cofactor.

Its subcellular location is the cytoplasm. It catalyses the reaction IMP + L-aspartate + GTP = N(6)-(1,2-dicarboxyethyl)-AMP + GDP + phosphate + 2 H(+). It participates in purine metabolism; AMP biosynthesis via de novo pathway; AMP from IMP: step 1/2. Plays an important role in the de novo pathway of purine nucleotide biosynthesis. Catalyzes the first committed step in the biosynthesis of AMP from IMP. The protein is Adenylosuccinate synthetase of Salmonella arizonae (strain ATCC BAA-731 / CDC346-86 / RSK2980).